The primary structure comprises 285 residues: tRNA pseudouridine synthase A (285 aa).

Catalysis depends on D64, which acts as the Nucleophile. Y125 is a binding site for substrate.

This sequence belongs to the tRNA pseudouridine synthase TruA family. Homodimer.

It catalyses the reaction uridine(38/39/40) in tRNA = pseudouridine(38/39/40) in tRNA. Formation of pseudouridine at positions 38, 39 and 40 in the anticodon stem and loop of transfer RNAs. This Streptomyces avermitilis (strain ATCC 31267 / DSM 46492 / JCM 5070 / NBRC 14893 / NCIMB 12804 / NRRL 8165 / MA-4680) protein is tRNA pseudouridine synthase A.